Here is a 632-residue protein sequence, read N- to C-terminus: 1,4-alpha-glucan branching enzyme GlgB (632 aa).

Catalysis depends on D310, which acts as the Nucleophile. E363 serves as the catalytic Proton donor.

The protein belongs to the glycosyl hydrolase 13 family. GlgB subfamily. Monomer.

The catalysed reaction is Transfers a segment of a (1-&gt;4)-alpha-D-glucan chain to a primary hydroxy group in a similar glucan chain.. Its pathway is glycan biosynthesis; glycogen biosynthesis. In terms of biological role, catalyzes the formation of the alpha-1,6-glucosidic linkages in glycogen by scission of a 1,4-alpha-linked oligosaccharide from growing alpha-1,4-glucan chains and the subsequent attachment of the oligosaccharide to the alpha-1,6 position. In Desulfitobacterium hafniense (strain Y51), this protein is 1,4-alpha-glucan branching enzyme GlgB.